The sequence spans 883 residues: Protein SEY1 homolog (883 aa).

At 1-795 (MQMDRKTQII…ETGGKMSLKN (795 aa)) the chain is on the cytoplasmic side. Residues 33-279 (GFNYNVVAIL…IPSDGFAHYC (247 aa)) form the GB1/RHD3-type G domain. 43 to 50 (GSQSSGKS) is a binding site for GTP. Positions 673 to 693 (LDEIMDVLKSKLDEISDNLSS) form a coiled coil. The chain crosses the membrane as a helical span at residues 796–816 (VPLFFWVILLILGWNELLFFI). Residues 817–819 (RFF) lie on the Lumenal side of the membrane. The helical transmembrane segment at 820–840 (FRLNIILPLFLAAAVILSTLF) threads the bilayer. Residues 841–883 (FNGNMEVLSTINKVVFFLAKSSFGFYRQLQTMGEKVAQVPTAD) lie on the Cytoplasmic side of the membrane.

This sequence belongs to the TRAFAC class dynamin-like GTPase superfamily. GB1/RHD3 GTPase family. RHD3 subfamily.

The protein localises to the endoplasmic reticulum membrane. Functionally, probable GTP-binding protein involved in generating and maintaining the structure of the tubular endoplasmic reticulum network. The chain is Protein SEY1 homolog from Plasmodium knowlesi (strain H).